A 347-amino-acid chain; its full sequence is UDP-N-acetylenolpyruvoylglucosamine reductase (347 aa).

The region spanning 15–187 (FGIEQTCSYL…TAIGLKLPKR (173 aa)) is the FAD-binding PCMH-type domain. Residue arginine 163 is part of the active site. Serine 233 serves as the catalytic Proton donor. The active site involves glutamate 328.

The protein belongs to the MurB family. The cofactor is FAD.

It localises to the cytoplasm. The enzyme catalyses UDP-N-acetyl-alpha-D-muramate + NADP(+) = UDP-N-acetyl-3-O-(1-carboxyvinyl)-alpha-D-glucosamine + NADPH + H(+). It functions in the pathway cell wall biogenesis; peptidoglycan biosynthesis. Cell wall formation. This is UDP-N-acetylenolpyruvoylglucosamine reductase from Vibrio parahaemolyticus serotype O3:K6 (strain RIMD 2210633).